The chain runs to 64 residues: Large ribosomal subunit protein bL35 (64 aa).

Belongs to the bacterial ribosomal protein bL35 family.

In Desulforamulus reducens (strain ATCC BAA-1160 / DSM 100696 / MI-1) (Desulfotomaculum reducens), this protein is Large ribosomal subunit protein bL35.